A 406-amino-acid polypeptide reads, in one-letter code: MRNALKLNKKNYIDNIHSRSKGWITRSVIDKKGYSQWHYKYAELKDLDMSDENIYITLNTFYKPCRRLENIKELNTLFIDLDYYKTGKTKDQVLMDLEKNYFNQSIPIPNYVIDSGRGMYLIWIINAVPSKALPLWKAVQEYLYNQLKYFGADRQALDATRILRVPGSINSKSKTVVNILDEYEYIYDLREIQNGFLPELKPYERKKGRPSKINYIYRERSLYYGRIQDIIKLCELREYDLKGHRELILFLYRYYLCSFTEDIEKALNDVLELNSMFRQHLSEREVIRATRSAERCYLDKNKQYKYKNETLIELLEITEEEQKYMTIIISKKEYKRRENIRGKKNYQEQLKAKGKATKKEELNVLRKKIKALKEKGFKNKEITLMLEVPIKTLERHITYMKKNGLL.

Its function is as follows. Is involved in replication of pIP404. The sequence is that of Replication protein (rep) from Clostridium perfringens.